The chain runs to 234 residues: Biosynthetic peptidoglycan transglycosylase (234 aa).

A helical membrane pass occupies residues 11–31 (RFLLFAMLGFVGLSVLLVLVF).

It belongs to the glycosyltransferase 51 family.

It localises to the cell inner membrane. It carries out the reaction [GlcNAc-(1-&gt;4)-Mur2Ac(oyl-L-Ala-gamma-D-Glu-L-Lys-D-Ala-D-Ala)](n)-di-trans,octa-cis-undecaprenyl diphosphate + beta-D-GlcNAc-(1-&gt;4)-Mur2Ac(oyl-L-Ala-gamma-D-Glu-L-Lys-D-Ala-D-Ala)-di-trans,octa-cis-undecaprenyl diphosphate = [GlcNAc-(1-&gt;4)-Mur2Ac(oyl-L-Ala-gamma-D-Glu-L-Lys-D-Ala-D-Ala)](n+1)-di-trans,octa-cis-undecaprenyl diphosphate + di-trans,octa-cis-undecaprenyl diphosphate + H(+). The protein operates within cell wall biogenesis; peptidoglycan biosynthesis. Its function is as follows. Peptidoglycan polymerase that catalyzes glycan chain elongation from lipid-linked precursors. In Chromohalobacter salexigens (strain ATCC BAA-138 / DSM 3043 / CIP 106854 / NCIMB 13768 / 1H11), this protein is Biosynthetic peptidoglycan transglycosylase.